A 49-amino-acid polypeptide reads, in one-letter code: GVPCLCDSDGPRPRGNTLSGILWFYPSGCPSGWHNCKAHGPNIGWCCKK.

Residues 1–7 (GVPCLCD) form a well-structured region region. 3 disulfide bridges follow: Cys-4–Cys-46, Cys-6–Cys-36, and Cys-29–Cys-47. The interval 8-17 (SDGPRPRGNT) is arg-14 loop (non-well-structured region). A well-structured region region spans residues 18–49 (LSGILWFYPSGCPSGWHNCKAHGPNIGWCCKK).

The protein belongs to the sea anemone sodium channel inhibitory toxin family. Type I subfamily.

The protein resides in the secreted. The protein localises to the nematocyst. In terms of biological role, binds specifically to voltage-gated sodium channels (Nav) (site 3), thereby delaying their inactivation. This toxin has the highest affinity of all anemone toxins for the mammalian sodium channel, whereas its paralog Anthopleurin-A retains the greatest capacity to discriminate between cardiac (Nav1.5/SCN5A) and neuronal sodium channels. When tested electrophysiologically, this toxin exhibits a high affinity for multiple sodium channels with a 50-fold preference for rat cardiac (Nav1.5/SCN5A) over neuronal channels (0.1 nM versus 5 nM). When tested by ion flux, the affinities are similar and appear to have higher affinity (9 nM versus 22 nM). The residue Lys-37 of this toxin has been shown to interact with channel Nav1.5 (residue Asp-1612 in rat and Asp-1610 in human), which is located in the DIV S3-S4 linker (corresponding to channel site 3). Selectively modifies sodium channel inactivation from the open state with little effect on channel activation or on inactivation from closed states. Does not display phospholipid-binding activities, suggesting that the domain IV S3-S4 linker is located at the extracellular surface and not buried in the phospholipid bilayer. The chain is Delta-actitoxin-Axm1b from Anthopleura xanthogrammica (Giant green sea anemone).